The following is a 116-amino-acid chain: Vesicle-associated membrane protein 5 (116 aa).

The Cytoplasmic portion of the chain corresponds to 1-72; sequence MAGKELERCQ…RWENARCRIY (72 aa). The v-SNARE coiled-coil homology domain maps to 5-65; that stretch reads ELERCQRQAD…KTLAQKKRWE (61 aa). Phosphoserine occurs at positions 41, 48, and 49. The chain crosses the membrane as a helical; Anchor for type IV membrane protein span at residues 73-93; sequence MGLAVGIALLILLIVLLVIFL. Topologically, residues 94–116 are vesicular; sequence PQSSKGSSAPQVQDAGPASGPGE. The interval 97–116 is disordered; the sequence is SKGSSAPQVQDAGPASGPGE.

The protein belongs to the synaptobrevin family.

It localises to the cell membrane. Its subcellular location is the endomembrane system. The protein resides in the golgi apparatus. It is found in the trans-Golgi network membrane. Functionally, may participate in trafficking events that are associated with myogenesis, such as myoblast fusion and/or GLUT4 trafficking. The protein is Vesicle-associated membrane protein 5 (VAMP5) of Bos taurus (Bovine).